The primary structure comprises 406 residues: Uronyl 2-sulfotransferase (406 aa).

Over 1–49 the chain is Cytoplasmic; sequence MKKKQQHPGGGADPWPHGAPMGGAPPGLGSWKRRVPLLPFLRFSLRDYG. A helical; Signal-anchor for type II membrane protein transmembrane segment spans residues 50–70; it reads FCMATLLVFCLGSLLYQLSGG. Residues 71 to 406 lie on the Lumenal side of the membrane; it reads PPRFLLDLRQ…EKWLEDIYKR (336 aa). N-linked (GlcNAc...) asparagine glycosylation is found at asparagine 84, asparagine 140, and asparagine 155. Histidine 168 is an active-site residue. N-linked (GlcNAc...) asparagine glycosylation is found at asparagine 173 and asparagine 319. Positions 387–399 are enriched in acidic residues; sequence EPIDDEEQDDEKW. Residues 387 to 406 form a disordered region; the sequence is EPIDDEEQDDEKWLEDIYKR.

Belongs to the sulfotransferase 3 family. Widely expressed.

The protein resides in the golgi apparatus membrane. In terms of biological role, sulfotransferase that catalyzes the transfer of sulfate to the position 2 of uronyl residues in glycosaminoglycan chains. Has mainly activity toward iduronyl residues in dermatan sulfate, and weaker activity toward glucuronyl residues of chondroitin sulfate. Has little to no activity toward desulfated N-resulfated heparin or N-sulfoheparosan. This Homo sapiens (Human) protein is Uronyl 2-sulfotransferase.